The following is a 76-amino-acid chain: Heat shock factor-binding protein 1 (76 aa).

Belongs to the HSBP1 family. As to quaternary structure, homohexamer. Associates with heptad repeats of HSF1 trimers and probably also HSF1 monomers, and with HSP70. Association with HSF1 trimers and HSP70 coincides with attenuation of heat shock response and the conversion of HSF1 trimer to monomer.

Its subcellular location is the nucleus. In terms of biological role, negative regulator of the heat shock response. Negatively affects HSF1 DNA-binding activity. May have a role in the suppression of the activation of the stress response during the aging process. The sequence is that of Heat shock factor-binding protein 1 (Hsbp1) from Mus musculus (Mouse).